Reading from the N-terminus, the 337-residue chain is Neurogenic differentiation factor 6 (337 aa).

The tract at residues 43 to 82 is disordered; the sequence is LRGKSIKRAPGEETEKEEEEEDREEEDENGLPRRRGLRKK. The span at 54–71 shows a compositional bias: acidic residues; sequence EETEKEEEEEDREEEDEN. The Nuclear localization signal motif lies at 80-86; it reads RKKKTTK. Residues 94 to 146 enclose the bHLH domain; that stretch reads FRRQEANARERNRMHGLNDALDNLRKVVPCYSKTQKLSKIETLRLAKNYIWAL.

In terms of assembly, efficient DNA binding requires dimerization with another bHLH protein.

The protein resides in the nucleus. Activates E box-dependent transcription in collaboration with TCF3/E47. May be a trans-acting factor involved in the development and maintenance of the mammalian nervous system. Transactivates the promoter of its own gene. The protein is Neurogenic differentiation factor 6 (NEUROD6) of Bos taurus (Bovine).